Consider the following 562-residue polypeptide: Dihydroxy-acid dehydratase 1 (562 aa).

Asp80 contacts Mg(2+). A [2Fe-2S] cluster-binding site is contributed by Cys121. Mg(2+)-binding residues include Asp122 and Lys123. Position 123 is an N6-carboxylysine (Lys123). Cys194 serves as a coordination point for [2Fe-2S] cluster. A Mg(2+)-binding site is contributed by Glu446. Ser472 serves as the catalytic Proton acceptor.

The protein belongs to the IlvD/Edd family. In terms of assembly, homodimer. [2Fe-2S] cluster serves as cofactor. Mg(2+) is required as a cofactor.

The catalysed reaction is (2R)-2,3-dihydroxy-3-methylbutanoate = 3-methyl-2-oxobutanoate + H2O. It carries out the reaction (2R,3R)-2,3-dihydroxy-3-methylpentanoate = (S)-3-methyl-2-oxopentanoate + H2O. Its pathway is amino-acid biosynthesis; L-isoleucine biosynthesis; L-isoleucine from 2-oxobutanoate: step 3/4. It functions in the pathway amino-acid biosynthesis; L-valine biosynthesis; L-valine from pyruvate: step 3/4. Functions in the biosynthesis of branched-chain amino acids. Catalyzes the dehydration of (2R,3R)-2,3-dihydroxy-3-methylpentanoate (2,3-dihydroxy-3-methylvalerate) into 2-oxo-3-methylpentanoate (2-oxo-3-methylvalerate) and of (2R)-2,3-dihydroxy-3-methylbutanoate (2,3-dihydroxyisovalerate) into 2-oxo-3-methylbutanoate (2-oxoisovalerate), the penultimate precursor to L-isoleucine and L-valine, respectively. The chain is Dihydroxy-acid dehydratase 1 from Staphylococcus saprophyticus subsp. saprophyticus (strain ATCC 15305 / DSM 20229 / NCIMB 8711 / NCTC 7292 / S-41).